We begin with the raw amino-acid sequence, 190 residues long: Corticoliberin (190 aa).

An N-terminal signal peptide occupies residues 1–24; sequence MRLRLLVSVGVLLVALLPSPPCRA. The propeptide occupies 25 to 147; the sequence is LLSRGPIPGA…QEAPAARKRR (123 aa). Disordered regions lie at residues 33–57 and 116–151; these read GARQ…QEPQ and RRPF…SQEP. Alanine amide is present on A188.

This sequence belongs to the sauvagine/corticotropin-releasing factor/urotensin I family. In terms of assembly, interacts (via C-terminus) with CRFR1 (via N-terminal extracellular domain). Produced by the hypothalamus.

It localises to the secreted. Hormone regulating the release of corticotropin from pituitary gland. Induces NLRP6 in intestinal epithelial cells, hence may influence gut microbiota profile. The chain is Corticoliberin (CRH) from Bos taurus (Bovine).